Reading from the N-terminus, the 808-residue chain is Probable ATP-dependent helicase MJ1401 (808 aa).

Positions 189 to 217 match the Q motif motif; the sequence is YKIDELDIPEELKEIIKSRGIEELLPVQT. The region spanning 221 to 391 is the Helicase ATP-binding domain; it reads KAGLLNGDDL…QLNAKLVLYN (171 aa). Residue 234–241 coordinates ATP; it reads SATSSGKT. The DEIH box motif lies at 336–339; it reads DEIH. The Helicase C-terminal domain occupies 396 to 585; sequence PLERHIIFCK…EDEEEEQILA (190 aa).

The protein belongs to the DEAD box helicase family.

In Methanocaldococcus jannaschii (strain ATCC 43067 / DSM 2661 / JAL-1 / JCM 10045 / NBRC 100440) (Methanococcus jannaschii), this protein is Probable ATP-dependent helicase MJ1401.